Consider the following 420-residue polypeptide: D-tagatose-1,6-bisphosphate aldolase subunit GatZ (420 aa).

The protein belongs to the GatZ/KbaZ family. GatZ subfamily. Forms a complex with GatY.

It functions in the pathway carbohydrate metabolism; D-tagatose 6-phosphate degradation; D-glyceraldehyde 3-phosphate and glycerone phosphate from D-tagatose 6-phosphate: step 2/2. Functionally, component of the tagatose-1,6-bisphosphate aldolase GatYZ that is required for full activity and stability of the Y subunit. Could have a chaperone-like function for the proper and stable folding of GatY. When expressed alone, GatZ does not show any aldolase activity. Is involved in the catabolism of galactitol. The protein is D-tagatose-1,6-bisphosphate aldolase subunit GatZ of Escherichia coli O17:K52:H18 (strain UMN026 / ExPEC).